A 55-amino-acid polypeptide reads, in one-letter code: ATP synthase F(0) complex subunit 8 (55 aa).

The helical transmembrane segment at 4-24 threads the bilayer; that stretch reads LNPHPWFSIFITSWLILIIIL.

Belongs to the ATPase protein 8 family. As to quaternary structure, component of the ATP synthase complex composed at least of ATP5F1A/subunit alpha, ATP5F1B/subunit beta, ATP5MC1/subunit c (homooctomer), MT-ATP6/subunit a, MT-ATP8/subunit 8, ATP5ME/subunit e, ATP5MF/subunit f, ATP5MG/subunit g, ATP5MK/subunit k, ATP5MJ/subunit j, ATP5F1C/subunit gamma, ATP5F1D/subunit delta, ATP5F1E/subunit epsilon, ATP5PF/subunit F6, ATP5PB/subunit b, ATP5PD/subunit d, ATP5PO/subunit OSCP. ATP synthase complex consists of a soluble F(1) head domain (subunits alpha(3) and beta(3)) - the catalytic core - and a membrane F(0) domain - the membrane proton channel (subunits c, a, 8, e, f, g, k and j). These two domains are linked by a central stalk (subunits gamma, delta, and epsilon) rotating inside the F1 region and a stationary peripheral stalk (subunits F6, b, d, and OSCP).

The protein resides in the mitochondrion membrane. Subunit 8, of the mitochondrial membrane ATP synthase complex (F(1)F(0) ATP synthase or Complex V) that produces ATP from ADP in the presence of a proton gradient across the membrane which is generated by electron transport complexes of the respiratory chain. ATP synthase complex consist of a soluble F(1) head domain - the catalytic core - and a membrane F(1) domain - the membrane proton channel. These two domains are linked by a central stalk rotating inside the F(1) region and a stationary peripheral stalk. During catalysis, ATP synthesis in the catalytic domain of F(1) is coupled via a rotary mechanism of the central stalk subunits to proton translocation. In vivo, can only synthesize ATP although its ATP hydrolase activity can be activated artificially in vitro. Part of the complex F(0) domain. This chain is ATP synthase F(0) complex subunit 8, found in Pelomedusa subrufa (African side-necked turtle).